The chain runs to 236 residues: Demethylmenaquinone methyltransferase (236 aa).

S-adenosyl-L-methionine contacts are provided by residues Thr-58, Asp-79, and 106–107; that span reads NA.

It belongs to the class I-like SAM-binding methyltransferase superfamily. MenG/UbiE family.

The enzyme catalyses a 2-demethylmenaquinol + S-adenosyl-L-methionine = a menaquinol + S-adenosyl-L-homocysteine + H(+). It functions in the pathway quinol/quinone metabolism; menaquinone biosynthesis; menaquinol from 1,4-dihydroxy-2-naphthoate: step 2/2. Its function is as follows. Methyltransferase required for the conversion of demethylmenaquinol (DMKH2) to menaquinol (MKH2). The chain is Demethylmenaquinone methyltransferase from Listeria welshimeri serovar 6b (strain ATCC 35897 / DSM 20650 / CCUG 15529 / CIP 8149 / NCTC 11857 / SLCC 5334 / V8).